Reading from the N-terminus, the 480-residue chain is tRNA-2-methylthio-N(6)-dimethylallyladenosine synthase (480 aa).

The region spanning 31 to 151 (RGLHVITWGC…LPEMVARAAR (121 aa)) is the MTTase N-terminal domain. The [4Fe-4S] cluster site is built by Cys-40, Cys-76, Cys-114, Cys-192, Cys-196, and Cys-199. A Radical SAM core domain is found at 178-410 (SPGGITSFLT…QALLRTQQDA (233 aa)). A TRAM domain is found at 413–475 (DGTVGHVVPV…TNSLSGTLVQ (63 aa)).

This sequence belongs to the methylthiotransferase family. MiaB subfamily. As to quaternary structure, monomer. It depends on [4Fe-4S] cluster as a cofactor.

It localises to the cytoplasm. It carries out the reaction N(6)-dimethylallyladenosine(37) in tRNA + (sulfur carrier)-SH + AH2 + 2 S-adenosyl-L-methionine = 2-methylsulfanyl-N(6)-dimethylallyladenosine(37) in tRNA + (sulfur carrier)-H + 5'-deoxyadenosine + L-methionine + A + S-adenosyl-L-homocysteine + 2 H(+). In terms of biological role, catalyzes the methylthiolation of N6-(dimethylallyl)adenosine (i(6)A), leading to the formation of 2-methylthio-N6-(dimethylallyl)adenosine (ms(2)i(6)A) at position 37 in tRNAs that read codons beginning with uridine. The protein is tRNA-2-methylthio-N(6)-dimethylallyladenosine synthase of Gluconacetobacter diazotrophicus (strain ATCC 49037 / DSM 5601 / CCUG 37298 / CIP 103539 / LMG 7603 / PAl5).